The primary structure comprises 546 residues: Probable bifunctional SAT/APS kinase (546 aa).

The tract at residues 1–370 (MEKIKYLKSI…LAETYVPKHK (370 aa)) is sulfate adenylyltransferase. Positions 371–546 (QGFCVWLTGL…FLKKEGFIKD (176 aa)) are adenylsulfate kinase. 379–386 (GLPCAGKS) is a binding site for ATP. Ser-453 serves as the catalytic Phosphoserine intermediate.

This sequence in the N-terminal section; belongs to the sulfate adenylyltransferase family. The protein in the C-terminal section; belongs to the APS kinase family.

It catalyses the reaction sulfate + ATP + H(+) = adenosine 5'-phosphosulfate + diphosphate. The enzyme catalyses adenosine 5'-phosphosulfate + ATP = 3'-phosphoadenylyl sulfate + ADP + H(+). It participates in sulfur metabolism; hydrogen sulfide biosynthesis; sulfite from sulfate: step 1/3. Its pathway is sulfur metabolism; hydrogen sulfide biosynthesis; sulfite from sulfate: step 2/3. The chain is Probable bifunctional SAT/APS kinase (sat/cysC) from Aquifex aeolicus (strain VF5).